A 172-amino-acid chain; its full sequence is uncharacterized protein (172 aa).

One can recognise a Ferritin-like diiron domain in the interval 1–148; that stretch reads MANSQKVIDV…TIHDFFENGN (148 aa).

This is an uncharacterized protein from Ureaplasma urealyticum (Ureaplasma urealyticum biotype 2).